A 126-amino-acid polypeptide reads, in one-letter code: uncharacterized protein (126 aa).

Disordered regions lie at residues 15-72 and 93-126; these read PEWG…SDPQ and TQIPEASDSQAAQKPQAHRQIPETTEAGRETTSN. Basic and acidic residues-rich tracts occupy residues 29-46 and 55-64; these read DPLDRRLQNLRDRERVPE and VQEDSREHGQ.

This is an uncharacterized protein from Homo sapiens (Human).